We begin with the raw amino-acid sequence, 629 residues long: DNA mismatch repair protein MutL (629 aa).

This sequence belongs to the DNA mismatch repair MutL/HexB family.

In terms of biological role, this protein is involved in the repair of mismatches in DNA. It is required for dam-dependent methyl-directed DNA mismatch repair. May act as a 'molecular matchmaker', a protein that promotes the formation of a stable complex between two or more DNA-binding proteins in an ATP-dependent manner without itself being part of a final effector complex. The sequence is that of DNA mismatch repair protein MutL from Haemophilus influenzae (strain PittGG).